The chain runs to 232 residues: Large ribosomal subunit protein uL1 (232 aa).

This sequence belongs to the universal ribosomal protein uL1 family. Part of the 50S ribosomal subunit.

Binds directly to 23S rRNA. The L1 stalk is quite mobile in the ribosome, and is involved in E site tRNA release. In terms of biological role, protein L1 is also a translational repressor protein, it controls the translation of the L11 operon by binding to its mRNA. The polypeptide is Large ribosomal subunit protein uL1 (Amoebophilus asiaticus (strain 5a2)).